A 239-amino-acid chain; its full sequence is UPF0641 membrane protein YHR140W (239 aa).

The Cytoplasmic portion of the chain corresponds to 1-11; sequence MMSCLVPTRFT. A helical membrane pass occupies residues 12–31; sequence LTLNTACLLTSTWGFVRATS. The Lumenal segment spans residues 32–45; sequence VVLPPSLSKAGHKQ. A helical membrane pass occupies residues 46–66; it reads FLTIISIIATIINNAVNISNY. The Cytoplasmic segment spans residues 67–99; the sequence is YIQRNNKMNLETKKKSDFISRHVTLPVSLVLES. The chain crosses the membrane as a helical span at residues 100-120; it reads IVATVYWPLRLFFVNLIMHGV. The Lumenal segment spans residues 121-125; that stretch reads ESTAK. A helical transmembrane segment spans residues 126–146; sequence TPFPMTVDMAIHLYPILYLLA. Topologically, residues 147–162 are cytoplasmic; the sequence is DHYLSGSGTKFKLSNK. Residues 163-183 traverse the membrane as a helical segment; that stretch reads HAWLIVTSLAFSYFQYLAFLI. The Lumenal portion of the chain corresponds to 184-204; the sequence is DAGQGQAYPYPFLDVNEPYKS. The helical transmembrane segment at 205–225 threads the bilayer; it reads IIFVVVATITWAYYVFYQKFP. The Cytoplasmic portion of the chain corresponds to 226 to 239; it reads PKYIKKSAKKGDKN.

This sequence belongs to the UPF0641 family.

It localises to the endoplasmic reticulum membrane. This is UPF0641 membrane protein YHR140W from Saccharomyces cerevisiae (strain ATCC 204508 / S288c) (Baker's yeast).